Here is a 351-residue protein sequence, read N- to C-terminus: N-acetyl-gamma-glutamyl-phosphate reductase (351 aa).

The active site involves C154.

This sequence belongs to the NAGSA dehydrogenase family. Type 1 subfamily.

It localises to the cytoplasm. It catalyses the reaction N-acetyl-L-glutamate 5-semialdehyde + phosphate + NADP(+) = N-acetyl-L-glutamyl 5-phosphate + NADPH + H(+). The protein operates within amino-acid biosynthesis; L-arginine biosynthesis; N(2)-acetyl-L-ornithine from L-glutamate: step 3/4. Its function is as follows. Catalyzes the NADPH-dependent reduction of N-acetyl-5-glutamyl phosphate to yield N-acetyl-L-glutamate 5-semialdehyde. The chain is N-acetyl-gamma-glutamyl-phosphate reductase from Prochlorococcus marinus (strain MIT 9215).